The chain runs to 282 residues: Small ribosomal subunit protein uS2 (282 aa).

The tract at residues Lys-260–Arg-282 is disordered. Over residues Val-266–Arg-282 the composition is skewed to basic and acidic residues.

It belongs to the universal ribosomal protein uS2 family.

In Wolbachia sp. subsp. Drosophila simulans (strain wRi), this protein is Small ribosomal subunit protein uS2.